We begin with the raw amino-acid sequence, 434 residues long: Glutamate-1-semialdehyde 2,1-aminomutase (434 aa).

Lys270 is modified (N6-(pyridoxal phosphate)lysine).

It belongs to the class-III pyridoxal-phosphate-dependent aminotransferase family. HemL subfamily. In terms of assembly, homodimer. Requires pyridoxal 5'-phosphate as cofactor.

The protein resides in the cytoplasm. It catalyses the reaction (S)-4-amino-5-oxopentanoate = 5-aminolevulinate. It participates in porphyrin-containing compound metabolism; protoporphyrin-IX biosynthesis; 5-aminolevulinate from L-glutamyl-tRNA(Glu): step 2/2. This is Glutamate-1-semialdehyde 2,1-aminomutase from Pelotomaculum thermopropionicum (strain DSM 13744 / JCM 10971 / SI).